Consider the following 284-residue polypeptide: MASLRDIKSRIASNKKMSQITKAQEMVSASKLNRAENKAKSFVPYMEKMQEVVADIAVGYTGKHPMMSSRPVKRTGYLVITADRGLAGAFNANVLRKAYQRIQERHQSKDEYAVIAVGRMGRDFFKKRGIPVISEMTGIRDEVTFSEIKDLANSTVQMYIDETFDELYLFYNHFVSAISQEVTEKKLLPLTDIAPNKKKTSFEFEPDEEEILEVLLPQYAESLIFGALLDSKASEHAARMTAMRNATDNAKEIIADLELSYNRARQASITQEITEIVGGAAALE.

It belongs to the ATPase gamma chain family. As to quaternary structure, F-type ATPases have 2 components, CF(1) - the catalytic core - and CF(0) - the membrane proton channel. CF(1) has five subunits: alpha(3), beta(3), gamma(1), delta(1), epsilon(1). CF(0) has three main subunits: a, b and c.

It is found in the cell membrane. In terms of biological role, produces ATP from ADP in the presence of a proton gradient across the membrane. The gamma chain is believed to be important in regulating ATPase activity and the flow of protons through the CF(0) complex. This chain is ATP synthase gamma chain, found in Bacillus licheniformis (strain ATCC 14580 / DSM 13 / JCM 2505 / CCUG 7422 / NBRC 12200 / NCIMB 9375 / NCTC 10341 / NRRL NRS-1264 / Gibson 46).